The following is a 211-amino-acid chain: Uracil phosphoribosyltransferase (211 aa).

Residues Arg-77, Arg-102, and 129 to 137 (DPMLATGGS) each bind 5-phospho-alpha-D-ribose 1-diphosphate. Residues Ile-192 and 197–199 (GDA) each bind uracil. Asp-198 is a 5-phospho-alpha-D-ribose 1-diphosphate binding site.

This sequence belongs to the UPRTase family. Requires Mg(2+) as cofactor.

The catalysed reaction is UMP + diphosphate = 5-phospho-alpha-D-ribose 1-diphosphate + uracil. Its pathway is pyrimidine metabolism; UMP biosynthesis via salvage pathway; UMP from uracil: step 1/1. Its activity is regulated as follows. Allosterically activated by GTP. In terms of biological role, catalyzes the conversion of uracil and 5-phospho-alpha-D-ribose 1-diphosphate (PRPP) to UMP and diphosphate. In Corynebacterium diphtheriae (strain ATCC 700971 / NCTC 13129 / Biotype gravis), this protein is Uracil phosphoribosyltransferase.